Here is a 304-residue protein sequence, read N- to C-terminus: Putative ankyrin repeat protein R602 (304 aa).

6 ANK repeats span residues 82–117 (LIRY…DITF), 118–146 (NDNF…DVHA), 147–176 (DNEF…DPFC), 178–206 (DNIV…DINA), 207–236 (GNNY…SIND), and 238–266 (SPND…DIST).

The protein is Putative ankyrin repeat protein R602 of Acanthamoeba polyphaga (Amoeba).